Here is a 475-residue protein sequence, read N- to C-terminus: tRNA-2-methylthio-N(6)-dimethylallyladenosine synthase (475 aa).

Residues 1–10 (MHETTLKREG) are compositionally biased toward basic and acidic residues. The disordered stretch occupies residues 1 to 25 (MHETTLKREGASTPSNPTPSTHAAG). Polar residues predominate over residues 12–23 (STPSNPTPSTHA). The region spanning 27-144 (GKIYIRTFGC…LPELIRRRRD (118 aa)) is the MTTase N-terminal domain. The [4Fe-4S] cluster site is built by cysteine 36, cysteine 73, cysteine 107, cysteine 181, cysteine 185, and cysteine 188. The Radical SAM core domain maps to 167–400 (RVEGATAFVS…QALINEQAAA (234 aa)). The TRAM domain maps to 403-466 (QSMVGTRQRL…TNSLRGRVAG (64 aa)).

This sequence belongs to the methylthiotransferase family. MiaB subfamily. In terms of assembly, monomer. Requires [4Fe-4S] cluster as cofactor.

The protein localises to the cytoplasm. The catalysed reaction is N(6)-dimethylallyladenosine(37) in tRNA + (sulfur carrier)-SH + AH2 + 2 S-adenosyl-L-methionine = 2-methylsulfanyl-N(6)-dimethylallyladenosine(37) in tRNA + (sulfur carrier)-H + 5'-deoxyadenosine + L-methionine + A + S-adenosyl-L-homocysteine + 2 H(+). Catalyzes the methylthiolation of N6-(dimethylallyl)adenosine (i(6)A), leading to the formation of 2-methylthio-N6-(dimethylallyl)adenosine (ms(2)i(6)A) at position 37 in tRNAs that read codons beginning with uridine. This Bordetella avium (strain 197N) protein is tRNA-2-methylthio-N(6)-dimethylallyladenosine synthase.